We begin with the raw amino-acid sequence, 271 residues long: uncharacterized protein (271 aa).

A disordered region spans residues V233–R261. Basic and acidic residues predominate over residues E251–R261.

May be involved in swimming motility. This is an uncharacterized protein from Haloferax volcanii (strain ATCC 29605 / DSM 3757 / JCM 8879 / NBRC 14742 / NCIMB 2012 / VKM B-1768 / DS2) (Halobacterium volcanii).